Consider the following 339-residue polypeptide: MKDVNEEERIIGAESSEEDETIELSLRPQLLAQYIGQDKVKSEMKIYIKAAKQRDEALDHVLLYGPPGLGKTTLAFVIANEMGVHLKSTSGPAIEKAGDLVALLSELNPGDVLFIDEIHRLAKPVEEVLYSAMEDFYIDIVVGEGQTTHAVHVPLPPFTLIGATTRAGQLSAPLRDRFGIIEHMQYYSVEDLEKIIQRSSVVFNTKIDPEAAIELARRSRGTPRVANRLLKRVRDFAEVKGEEAISLVTTKHSLHLLEVDDEGLDQTDRKLLRMMIENYGGGPVGIKTIAANVGEDTDTIEEVYEPYLLQKGFITRTPRGRSVTQKAYLQLGYPPKDEK.

The segment at 2 to 187 (KDVNEEERII…FGIIEHMQYY (186 aa)) is large ATPase domain (RuvB-L). ATP is bound by residues Leu26, Arg27, Gly68, Lys71, Thr72, Thr73, 134 to 136 (EDF), Arg177, Tyr187, and Arg224. Position 72 (Thr72) interacts with Mg(2+). Positions 188–258 (SVEDLEKIIQ…TTKHSLHLLE (71 aa)) are small ATPAse domain (RuvB-S). Positions 261 to 339 (DEGLDQTDRK…QLGYPPKDEK (79 aa)) are head domain (RuvB-H). DNA is bound by residues Arg316 and Arg321.

This sequence belongs to the RuvB family. Homohexamer. Forms an RuvA(8)-RuvB(12)-Holliday junction (HJ) complex. HJ DNA is sandwiched between 2 RuvA tetramers; dsDNA enters through RuvA and exits via RuvB. An RuvB hexamer assembles on each DNA strand where it exits the tetramer. Each RuvB hexamer is contacted by two RuvA subunits (via domain III) on 2 adjacent RuvB subunits; this complex drives branch migration. In the full resolvosome a probable DNA-RuvA(4)-RuvB(12)-RuvC(2) complex forms which resolves the HJ.

The protein resides in the cytoplasm. The enzyme catalyses ATP + H2O = ADP + phosphate + H(+). Its function is as follows. The RuvA-RuvB-RuvC complex processes Holliday junction (HJ) DNA during genetic recombination and DNA repair, while the RuvA-RuvB complex plays an important role in the rescue of blocked DNA replication forks via replication fork reversal (RFR). RuvA specifically binds to HJ cruciform DNA, conferring on it an open structure. The RuvB hexamer acts as an ATP-dependent pump, pulling dsDNA into and through the RuvAB complex. RuvB forms 2 homohexamers on either side of HJ DNA bound by 1 or 2 RuvA tetramers; 4 subunits per hexamer contact DNA at a time. Coordinated motions by a converter formed by DNA-disengaged RuvB subunits stimulates ATP hydrolysis and nucleotide exchange. Immobilization of the converter enables RuvB to convert the ATP-contained energy into a lever motion, pulling 2 nucleotides of DNA out of the RuvA tetramer per ATP hydrolyzed, thus driving DNA branch migration. The RuvB motors rotate together with the DNA substrate, which together with the progressing nucleotide cycle form the mechanistic basis for DNA recombination by continuous HJ branch migration. Branch migration allows RuvC to scan DNA until it finds its consensus sequence, where it cleaves and resolves cruciform DNA. The chain is Holliday junction branch migration complex subunit RuvB from Lactobacillus johnsonii (strain CNCM I-12250 / La1 / NCC 533).